A 186-amino-acid polypeptide reads, in one-letter code: Large ribosomal subunit protein uL22 (186 aa).

Residues 160-186 (AAENEPAKKKLSKKKLQRQKEKMMRNE) form a disordered region. Basic and acidic residues predominate over residues 177–186 (RQKEKMMRNE).

This sequence belongs to the universal ribosomal protein uL22 family.

The polypeptide is Large ribosomal subunit protein uL22 (RpL17) (Aedes aegypti (Yellowfever mosquito)).